Here is a 719-residue protein sequence, read N- to C-terminus: Mini-chromosome maintenance complex-binding protein (719 aa).

Residues 152–174 (NNNNNNNNNNNNNNNNNNNNNNN) show a composition bias toward low complexity. Disordered stretches follow at residues 152–179 (NNNN…NEQI), 194–236 (ADMK…QLTK), and 375–416 (TINN…NNNN). A compositionally biased stretch (basic and acidic residues) spans 194–211 (ADMKNENDEENKKSKDQK). Low complexity-rich tracts occupy residues 212–221 (STTTTTTTTS) and 377–416 (NNNN…NNNN).

It belongs to the MCMBP family. Interacts with the MCM complex.

Its subcellular location is the nucleus. Its function is as follows. Associated component of the MCM complex that acts as a regulator of DNA replication. Binds to the MCM complex during late S phase and may act by promoting the disassembly of the MCM complex from chromatin. In Dictyostelium discoideum (Social amoeba), this protein is Mini-chromosome maintenance complex-binding protein (mcmbp).